The primary structure comprises 500 residues: L-arabinose isomerase (500 aa).

Mn(2+)-binding residues include Glu-306, Glu-333, His-350, and His-450.

The protein belongs to the arabinose isomerase family. In terms of assembly, homohexamer. It depends on Mn(2+) as a cofactor.

It carries out the reaction beta-L-arabinopyranose = L-ribulose. It participates in carbohydrate degradation; L-arabinose degradation via L-ribulose; D-xylulose 5-phosphate from L-arabinose (bacterial route): step 1/3. Catalyzes the conversion of L-arabinose to L-ribulose. This chain is L-arabinose isomerase, found in Escherichia coli (strain 55989 / EAEC).